Here is a 262-residue protein sequence, read N- to C-terminus: Flap endonuclease Xni (262 aa).

A Mg(2+)-binding site is contributed by D109. A 5'-3' exonuclease domain is found at 165 to 255 (LKPEQLADYW…FNLQDIRYEK (91 aa)). K(+)-binding residues include L176, A177, I187, and V190. The interaction with DNA stretch occupies residues 189–194 (GVGPKA).

This sequence belongs to the Xni family. The cofactor is Mg(2+). K(+) is required as a cofactor.

Functionally, has flap endonuclease activity. During DNA replication, flap endonucleases cleave the 5'-overhanging flap structure that is generated by displacement synthesis when DNA polymerase encounters the 5'-end of a downstream Okazaki fragment. In Aliivibrio fischeri (strain MJ11) (Vibrio fischeri), this protein is Flap endonuclease Xni.